Here is a 552-residue protein sequence, read N- to C-terminus: Non-structural protein NS1 (552 aa).

It belongs to the orbivirus non-structural protein NS1 family.

This is Non-structural protein NS1 (Segment-5) from Antilocapra americana (Pronghorn).